Reading from the N-terminus, the 123-residue chain is Alpha-lactalbumin A (123 aa).

One can recognise a C-type lysozyme domain in the interval 1-123 (KQFTKCELSQ…KLEQWLCEEL (123 aa)). 4 disulfide bridges follow: C6–C120, C28–C111, C61–C77, and C73–C91. Residues K79, D82, D84, D87, and D88 each contribute to the Ca(2+) site.

Belongs to the glycosyl hydrolase 22 family. Lactose synthase (LS) is a heterodimer of a catalytic component, beta1,4-galactosyltransferase (beta4Gal-T1) and a regulatory component, alpha-lactalbumin (LA). As to expression, mammary gland specific. Secreted in milk.

It is found in the secreted. Regulatory subunit of lactose synthase, changes the substrate specificity of galactosyltransferase in the mammary gland making glucose a good acceptor substrate for this enzyme. This enables LS to synthesize lactose, the major carbohydrate component of milk. In other tissues, galactosyltransferase transfers galactose onto the N-acetylglucosamine of the oligosaccharide chains in glycoproteins. The protein is Alpha-lactalbumin A of Equus caballus (Horse).